Here is a 294-residue protein sequence, read N- to C-terminus: MFKGSIVALITPMDEKGQICRISLEKLINYHVASKTEAIVSIGTTGESATLSQEEHINIVMLTLELADGRIPVIAGTGANATTEAISLTKRFEKSGVAGCLSVTPYYNRPTQEGLYQHFKAISENTELPQILYNVPSRTGCDLLPETVAKLSHFNNIIGIKEATGDLSRIHKIKELVKTNFLLISGDDATALDFMQLGGQGVISVTANIAAKEMMEICSYALKGDFINARSINKRLMLLHEALFIEPNPIPVKWLAKKIGLIKSDTLRLPMTPVLDSTRFQLEKAIQYANLKIS.

Thr-45 lines the pyruvate pocket. Catalysis depends on Tyr-133, which acts as the Proton donor/acceptor. Lys-161 functions as the Schiff-base intermediate with substrate in the catalytic mechanism. Ile-203 lines the pyruvate pocket.

Belongs to the DapA family. In terms of assembly, homotetramer; dimer of dimers.

It is found in the cytoplasm. It catalyses the reaction L-aspartate 4-semialdehyde + pyruvate = (2S,4S)-4-hydroxy-2,3,4,5-tetrahydrodipicolinate + H2O + H(+). The protein operates within amino-acid biosynthesis; L-lysine biosynthesis via DAP pathway; (S)-tetrahydrodipicolinate from L-aspartate: step 3/4. Catalyzes the condensation of (S)-aspartate-beta-semialdehyde [(S)-ASA] and pyruvate to 4-hydroxy-tetrahydrodipicolinate (HTPA). This chain is 4-hydroxy-tetrahydrodipicolinate synthase, found in Buchnera aphidicola subsp. Acyrthosiphon pisum (strain APS) (Acyrthosiphon pisum symbiotic bacterium).